Here is a 376-residue protein sequence, read N- to C-terminus: Homeobox protein extradenticle (376 aa).

The tract at residues 1 to 37 (MEDPNRMLAHTGGMMAPQGYGLSGQDDGQNAGSENEV) is disordered. Residues 38-237 (RKQKDIGEIL…VMILRSRFLD (200 aa)) enclose the PBC domain. The PBC-A stretch occupies residues 45-124 (EILQQIMSIS…EGVAGPEKGG (80 aa)). The PBC-B stretch occupies residues 127 to 237 (AAAASAAAAS…VMILRSRFLD (111 aa)). Positions 238–300 (ARRKRRNFSK…NKRIRYKKNI (63 aa)) form a DNA-binding region, homeobox; TALE-type. A compositionally biased stretch (low complexity) spans 318–335 (ASPYSMAGPPSGTTTPMM). Residues 318 to 376 (ASPYSMAGPPSGTTTPMMSPAPPQDSMGYPMGSGGYDQQQPYDNSMGGYDPNLHQDLSP) form a disordered region.

The protein belongs to the TALE/PBX homeobox family. In terms of assembly, interacts with Ubx and hth. In terms of tissue distribution, prior to full germband retraction it is ubiquitously present, after germband retraction, mostly present in the anterior portion of the ventral nerve cord.

The protein resides in the nucleus. Its function is as follows. Transcription factor which acts with the selector homeodomain proteins altering the regulation of downstream target genes such as wingless (wg), teashirt (tsh) and decapentaplegic (dpp), thus affecting segmental identity. Delimits the eye field and prevent inappropriate eye development. Required for proper localization of chordotonal organs within the peripheral nervous system. This chain is Homeobox protein extradenticle (exd), found in Drosophila melanogaster (Fruit fly).